The sequence spans 141 residues: Cystatin (141 aa).

Positions 1 to 26 (MVHSQLPVAGPLRLLCALLLLPSATM) are cleaved as a signal peptide. A Cystatin domain is found at 29-129 (GGLSPRSVTD…CRFQVWSRPW (101 aa)). A Secondary area of contact motif is present at residues 73–77 (QVVSG). 2 disulfides stabilise this stretch: cysteine 91–cysteine 107 and cysteine 120–cysteine 140.

The protein belongs to the cystatin family. In terms of tissue distribution, expressed at a low level by the venom gland (at protein level).

Its subcellular location is the secreted. Functionally, inhibits various C1 cysteine proteases including cathepsin L, papain and cathepsin B. This protein has no toxic activity and its function in the venom is unknown. It may play a role as a housekeeping or regulatory protein. This chain is Cystatin, found in Pseudechis porphyriacus (Red-bellied black snake).